Here is a 257-residue protein sequence, read N- to C-terminus: Ribonuclease HII (257 aa).

The 186-residue stretch at 72–257 folds into the RNase H type-2 domain; it reads TYIAGIDEVG…FAPIKDMIQK (186 aa). A divalent metal cation contacts are provided by aspartate 78, glutamate 79, and aspartate 170.

This sequence belongs to the RNase HII family. It depends on Mn(2+) as a cofactor. Mg(2+) serves as cofactor.

Its subcellular location is the cytoplasm. It carries out the reaction Endonucleolytic cleavage to 5'-phosphomonoester.. Functionally, endonuclease that specifically degrades the RNA of RNA-DNA hybrids. The chain is Ribonuclease HII from Bacillus cereus (strain B4264).